A 167-amino-acid polypeptide reads, in one-letter code: Crossover junction endodeoxyribonuclease RuvC (167 aa).

Catalysis depends on residues aspartate 7, glutamate 67, and aspartate 139. Positions 7, 67, and 139 each coordinate Mg(2+).

This sequence belongs to the RuvC family. As to quaternary structure, homodimer which binds Holliday junction (HJ) DNA. The HJ becomes 2-fold symmetrical on binding to RuvC with unstacked arms; it has a different conformation from HJ DNA in complex with RuvA. In the full resolvosome a probable DNA-RuvA(4)-RuvB(12)-RuvC(2) complex forms which resolves the HJ. Requires Mg(2+) as cofactor.

It is found in the cytoplasm. The enzyme catalyses Endonucleolytic cleavage at a junction such as a reciprocal single-stranded crossover between two homologous DNA duplexes (Holliday junction).. In terms of biological role, the RuvA-RuvB-RuvC complex processes Holliday junction (HJ) DNA during genetic recombination and DNA repair. Endonuclease that resolves HJ intermediates. Cleaves cruciform DNA by making single-stranded nicks across the HJ at symmetrical positions within the homologous arms, yielding a 5'-phosphate and a 3'-hydroxyl group; requires a central core of homology in the junction. The consensus cleavage sequence is 5'-(A/T)TT(C/G)-3'. Cleavage occurs on the 3'-side of the TT dinucleotide at the point of strand exchange. HJ branch migration catalyzed by RuvA-RuvB allows RuvC to scan DNA until it finds its consensus sequence, where it cleaves and resolves the cruciform DNA. The polypeptide is Crossover junction endodeoxyribonuclease RuvC (Akkermansia muciniphila (strain ATCC BAA-835 / DSM 22959 / JCM 33894 / BCRC 81048 / CCUG 64013 / CIP 107961 / Muc)).